The chain runs to 267 residues: tRNA pseudouridine synthase A (267 aa).

Aspartate 53 functions as the Nucleophile in the catalytic mechanism. Tyrosine 114 is a substrate binding site.

It belongs to the tRNA pseudouridine synthase TruA family. As to quaternary structure, homodimer.

It catalyses the reaction uridine(38/39/40) in tRNA = pseudouridine(38/39/40) in tRNA. Its function is as follows. Formation of pseudouridine at positions 38, 39 and 40 in the anticodon stem and loop of transfer RNAs. The protein is tRNA pseudouridine synthase A of Chlamydia trachomatis serovar L2b (strain UCH-1/proctitis).